A 1351-amino-acid polypeptide reads, in one-letter code: Non-structural polyprotein 1AB (1351 aa).

Positions 105 to 144 (LVQDHKAKTREVEDLKSQLSQLRMEHEILRHEYERLKLKS) form a coiled coil. The next 5 membrane-spanning stretches (helical) occupy residues 153 to 173 (LKVLLFSLLLGLLFAGVTNGA), 231 to 251 (LVFQTVFNWYFCATALAVYYM), 257 to 277 (PIVMFVTLALATLSQFQLLAV), 304 to 324 (ISILVSFCVLVLSVMIGTFMA), and 337 to 357 (VVFAIVCYSHVAMILNIPPWV). Catalysis depends on charge relay system; for serine protease activity residues H452, D481, and S544. Residues 579 to 635 (EVRKISKREQELEDRVKQLEGMLNMDQAYVDSNLIVDLVREAVQREMKVLRTELANL) are a coiled coil. Y662 carries the O-(5'-phospho-RNA)-tyrosine modification. Residues 687–699 (YDDEDEQSEEEAG) are compositionally biased toward acidic residues. Disordered stretches follow at residues 687-708 (YDDEDEQSEEEAGYPDWSDPGD) and 822-842 (RKRVQQPKKLQRGPEDPGPEE). Positions 822-832 (RKRVQQPKKLQ) are enriched in basic residues. Over residues 833 to 842 (RGPEDPGPEE) the composition is skewed to basic and acidic residues. In terms of domain architecture, RdRp catalytic spans 1085–1217 (PYWIEFDWTR…TSPSVPNDYV (133 aa)).

It belongs to the astroviridae polyprotein 1AB family. As to quaternary structure, monomer. In terms of processing, cleaved by the viral and host proteases. The protease is probably autocatalytically cleaved.

Its subcellular location is the host membrane. It carries out the reaction RNA(n) + a ribonucleoside 5'-triphosphate = RNA(n+1) + diphosphate. In terms of biological role, responsible for the cleavage of the polyprotein into functional products. Its function is as follows. Protein covalently attached to the 5' extremity of the genomic and subgenomic RNAs. It may serve as a primer for the replicase. This Ovis aries (Sheep) protein is Non-structural polyprotein 1AB (ORF1).